Reading from the N-terminus, the 118-residue chain is MICOS complex subunit MIC13 (118 aa).

The Mitochondrial matrix segment spans residues 1–7; sequence MVARVWS. A helical membrane pass occupies residues 8-26; sequence LMRFLIKGSVAGGAVYLVY. Topologically, residues 27–118 are mitochondrial intermembrane; that stretch reads DQELLGPSDK…GWEYVKARTK (92 aa).

Belongs to the MICOS complex subunit Mic13 family. As to quaternary structure, component of the mitochondrial contact site and cristae organizing system (MICOS) complex, composed of at least MICOS10/MIC10, CHCHD3/MIC19, CHCHD6/MIC25, APOO/MIC26, MICOS13/MIC13, APOOL/MIC27 and IMMT/MIC60. The complex associates with mitochondrial outer membrane proteins SAMM50, MTX1 and MTX2, and with HSPA9.

The protein resides in the mitochondrion inner membrane. Functionally, component of the MICOS complex, a large protein complex of the mitochondrial inner membrane that plays crucial roles in the maintenance of crista junctions, inner membrane architecture, and formation of contact sites to the outer membrane. Constituent of mature MICOS complex, it is required for the formation of cristae junction (CJ) and maintenance of cristae morphology. Required for the incorporation of MICOS10/MIC10 into the MICOS complex. The protein is MICOS complex subunit MIC13 of Macaca fascicularis (Crab-eating macaque).